Reading from the N-terminus, the 201-residue chain is Cerebellin-4 (201 aa).

The N-terminal stretch at 1-27 (MGSGRRALSAVPAVLLVLTLPGLPVWA) is a signal peptide. Residues asparagine 29 and asparagine 88 are each glycosylated (N-linked (GlcNAc...) asparagine). The 136-residue stretch at 66-201 (AANSKVAFSA…TFSGFLVFPL (136 aa)) folds into the C1q domain.

Homohexamer; disulfide-linked homotrimers. The trimers are assembled via the globular C1q domains. The trimers associate via N-terminal cysteine residues to form disulfide-linked hexamers. May form oligomers with CBLN1, CBLN2 and CBLN3 prior to secretion. Strongly interacts with DCC in a NTN1-displaceable fashion. Weakly binds to NRXN1 and NRXN2 long and short isoforms produced by alternative promoter usage. Interaction with NRXN3 short isoform is hardly detectable; no interaction at all with NRXN3 long isoform. Post-translationally, sialoglycoprotein.

The protein resides in the secreted. The protein localises to the synapse. Functionally, acts as a synaptic organizer in specific subsets of neurons in the brain. Essential for the formation and maintenance of inhibitory GABAergic synapses. Promotes the development of dendrite-targeting inhibitory GABAergic synapses made by somatostatin-positive interneurons. May contribute to the function of ventral medial habenula region of the brain implicated in the regulation of anxiety-related behaviors. May play a role in CBLN3 export from the endoplasmic reticulum and secretion. In Homo sapiens (Human), this protein is Cerebellin-4 (CBLN4).